We begin with the raw amino-acid sequence, 423 residues long: Histidine--tRNA ligase (423 aa).

It belongs to the class-II aminoacyl-tRNA synthetase family. As to quaternary structure, homodimer.

The protein resides in the cytoplasm. The enzyme catalyses tRNA(His) + L-histidine + ATP = L-histidyl-tRNA(His) + AMP + diphosphate + H(+). The chain is Histidine--tRNA ligase from Desulfosudis oleivorans (strain DSM 6200 / JCM 39069 / Hxd3) (Desulfococcus oleovorans).